The sequence spans 284 residues: 16S rRNA (guanine(1405)-N(7))-methyltransferase (284 aa).

S-adenosyl-L-methionine is bound by residues Tyr73, 111 to 113, Arg117, Ala142, Asp165, 191 to 192, Leu208, and Gln217; these read HAS and DL.

This sequence belongs to the methyltransferase superfamily. Aminoglycoside resistance family.

The catalysed reaction is guanosine(1405) in 16S rRNA + S-adenosyl-L-methionine = N(7)-methylguanosine(1405) in 16S rRNA + S-adenosyl-L-homocysteine. Its function is as follows. Specifically methylates the N(7) position of guanine 1405 in 16S rRNA. Confers resistance to various aminoglycosides, including gentamicin and kanamycin. This Frankia casuarinae (strain DSM 45818 / CECT 9043 / HFP020203 / CcI3) protein is 16S rRNA (guanine(1405)-N(7))-methyltransferase (Krm).